Reading from the N-terminus, the 122-residue chain is Biogenesis of lysosome-related organelles complex 1 subunit CNL1 (122 aa).

Over residues 1–10 (MQDNSSHSRE) the composition is skewed to basic and acidic residues. Residues 1–21 (MQDNSSHSRESASAGDDPLGI) form a disordered region. Residues 63 to 95 (ENTIDKNIAKFKELLEKCDTLENHYEMLNQLAI) adopt a coiled-coil conformation.

This sequence belongs to the BLOC1S4 family. Component of the biogenesis of lysosome-related organelles complex-1 (BLOC-1) composed of at least BLI1, BLS1, CNL1, KXD1, SNN1 and VAB2.

It localises to the cytoplasm. Component of the biogenesis of lysosome-related organelles complex-1 (BLOC-1), a complex that is involved in endosomal cargo sorting. This Saccharomyces cerevisiae (strain ATCC 204508 / S288c) (Baker's yeast) protein is Biogenesis of lysosome-related organelles complex 1 subunit CNL1 (CNL1).